A 953-amino-acid chain; its full sequence is Eukaryotic translation initiation factor 3 subunit A (953 aa).

Residues 323–504 form the PCI domain; it reads LQKMASHVLL…KSISFGLDLH (182 aa). Coiled-coil stretches lie at residues 593-642, 670-704, and 732-877; these read QERE…KRQA, MNADDIIAKQVEQLDKEKRELQTKLKTQEKKVDYF, and ENQE…LEER. The segment at 603-623 is disordered; it reads IKKQKVENQEAEQKRLDEERR. Disordered regions lie at residues 810-861 and 893-953; these read ERKK…EIDR and GWGD…ITMS. 3 stretches are compositionally biased toward basic and acidic residues: residues 812 to 861, 895 to 919, and 928 to 953; these read KKIE…EIDR, GDHEDGGDRWRDERGGDRGPDRGGD, and WQREEPDRGGDRWRGGDRRDGMITMS.

Belongs to the eIF-3 subunit A family. In terms of assembly, component of the eukaryotic translation initiation factor 3 (eIF-3) complex.

The protein resides in the cytoplasm. Its function is as follows. RNA-binding component of the eukaryotic translation initiation factor 3 (eIF-3) complex, which is involved in protein synthesis of a specialized repertoire of mRNAs and, together with other initiation factors, stimulates binding of mRNA and methionyl-tRNAi to the 40S ribosome. The eIF-3 complex specifically targets and initiates translation of a subset of mRNAs involved in cell proliferation. The protein is Eukaryotic translation initiation factor 3 subunit A of Nematostella vectensis (Starlet sea anemone).